Here is an 827-residue protein sequence, read N- to C-terminus: Glycerol-3-phosphate acyltransferase 1, mitochondrial (827 aa).

The Cytoplasmic segment spans residues 1 to 87 (MEESSVTVGT…FFNPSIPSLG (87 aa)). Residues 80–120 (NPSIPSLGLRNVIYINETHTRHRGWLARRLSYILFVQERDV) are important for mitochondrial localization. The stretch at 88 to 118 (LRNVIYINETHTRHRGWLARRLSYILFVQER) is an intramembrane region. Topologically, residues 119–827 (DVHKGMFATS…LEYILSFVVL (709 aa)) are cytoplasmic. The HXXXXD motif signature appears at 230-235 (HRSHID). CoA is bound by residues arginine 278, arginine 279, lysine 288, arginine 293, and arginine 328. Serine 380 is modified (phosphoserine). Arginine 462 is a CoA binding site. Residues serine 687 and serine 694 each carry the phosphoserine modification. N6-acetyllysine occurs at positions 779 and 783.

It belongs to the GPAT/DAPAT family. As to expression, highest levels in liver, intermediate levels in muscle and kidney, and lowest levels in lung and brain.

It is found in the mitochondrion outer membrane. It catalyses the reaction sn-glycerol 3-phosphate + an acyl-CoA = a 1-acyl-sn-glycero-3-phosphate + CoA. The enzyme catalyses (9Z,12Z)-octadecadienoyl-CoA + sn-glycerol 3-phosphate = 1-(9Z,12Z)-octadecadienoyl-sn-glycero-3-phosphate + CoA. The catalysed reaction is sn-glycerol 3-phosphate + (9Z)-octadecenoyl-CoA = 1-(9Z-octadecenoyl)-sn-glycero-3-phosphate + CoA. It carries out the reaction sn-glycerol 3-phosphate + octadecanoyl-CoA = 1-octadecanoyl-sn-glycero-3-phosphate + CoA. It catalyses the reaction sn-glycerol 3-phosphate + hexadecanoyl-CoA = 1-hexadecanoyl-sn-glycero-3-phosphate + CoA. The enzyme catalyses dodecanoyl-CoA + sn-glycerol 3-phosphate = 1-dodecanoyl-sn-glycerol 3-phosphate + CoA. The catalysed reaction is 1-acyl-sn-glycero-3-phospho-(1'-sn-glycerol) + an acyl-CoA = a 1,2-diacyl-sn-glycero-3-phospho-(1'-sn-glycerol) + CoA. It functions in the pathway phospholipid metabolism; CDP-diacylglycerol biosynthesis; CDP-diacylglycerol from sn-glycerol 3-phosphate: step 1/3. Its function is as follows. Mitochondrial membrane protein that catalyzes the essential first step of biosynthesis of glycerolipids such as triglycerides, phosphatidic acids and lysophosphatidic acids. Esterifies acyl-group from acyl-coenzyme A (acyl-CoA) to the sn-1 position of glycerol-3-phosphate, to produce lysophosphatidic acid. Has a narrow hydrophobic binding cleft that selects for a linear acyl chain. Catalytic activity is higher for substrates with a 16-carbon acyl chain. The protein is Glycerol-3-phosphate acyltransferase 1, mitochondrial of Mus musculus (Mouse).